The primary structure comprises 591 residues: DEAD-box ATP-dependent RNA helicase 30 (591 aa).

Residues 1-109 (MSSYDRRFAD…GRGGSSKREL (109 aa)) are disordered. A compositionally biased stretch (gly residues) spans 72-103 (FSVGRGGGRGGYGQYGDRNGGGNWGGGGGRGG). The Q motif motif lies at 165 to 193 (KMFQDANFPDNILEAIAKLGFTEPTPIQA). The Helicase ATP-binding domain occupies 196–371 (WPMALKGRDL…RQFLRDPYKA (176 aa)). 209 to 216 (AETGSGKT) is an ATP binding site. Positions 319-322 (DEAD) match the DEAD box motif. One can recognise a Helicase C-terminal domain in the interval 399–544 (RLLTLLKQLM…VVPPTLSALV (146 aa)). The tract at residues 547–591 (SGSGYGGSGGGRNFRPRGGGRGGGFGDKRSRSTSNFVPHGGKRTW) is disordered. A compositionally biased stretch (gly residues) spans 549–571 (SGYGGSGGGRNFRPRGGGRGGGF).

The protein belongs to the DEAD box helicase family. DDX5/DBP2 subfamily.

It is found in the nucleus. The catalysed reaction is ATP + H2O = ADP + phosphate + H(+). Its function is as follows. ATP-dependent RNA helicase involved nonsense-mediated mRNA decay and ribosome biogenesis through rRNA processing. The sequence is that of DEAD-box ATP-dependent RNA helicase 30 (RH30) from Arabidopsis thaliana (Mouse-ear cress).